The sequence spans 225 residues: Phosphatidylserine decarboxylase proenzyme (225 aa).

Ser-195 acts as the Schiff-base intermediate with substrate; via pyruvic acid in catalysis. Ser-195 is subject to Pyruvic acid (Ser); by autocatalysis.

It belongs to the phosphatidylserine decarboxylase family. PSD-A subfamily. In terms of assembly, heterodimer of a large membrane-associated beta subunit and a small pyruvoyl-containing alpha subunit. Pyruvate is required as a cofactor. Post-translationally, is synthesized initially as an inactive proenzyme. Formation of the active enzyme involves a self-maturation process in which the active site pyruvoyl group is generated from an internal serine residue via an autocatalytic post-translational modification. Two non-identical subunits are generated from the proenzyme in this reaction, and the pyruvate is formed at the N-terminus of the alpha chain, which is derived from the carboxyl end of the proenzyme. The post-translation cleavage follows an unusual pathway, termed non-hydrolytic serinolysis, in which the side chain hydroxyl group of the serine supplies its oxygen atom to form the C-terminus of the beta chain, while the remainder of the serine residue undergoes an oxidative deamination to produce ammonia and the pyruvoyl prosthetic group on the alpha chain.

It is found in the cell membrane. It catalyses the reaction a 1,2-diacyl-sn-glycero-3-phospho-L-serine + H(+) = a 1,2-diacyl-sn-glycero-3-phosphoethanolamine + CO2. It participates in phospholipid metabolism; phosphatidylethanolamine biosynthesis; phosphatidylethanolamine from CDP-diacylglycerol: step 2/2. Functionally, catalyzes the formation of phosphatidylethanolamine (PtdEtn) from phosphatidylserine (PtdSer). In Gluconacetobacter diazotrophicus (strain ATCC 49037 / DSM 5601 / CCUG 37298 / CIP 103539 / LMG 7603 / PAl5), this protein is Phosphatidylserine decarboxylase proenzyme.